The primary structure comprises 480 residues: Major facilitator superfamily domain-containing protein 12 (480 aa).

Met-1 is subject to N-acetylmethionine. Over 1–26 (MGPGPPAAGAAPSPRPLSLVARLSYA) the chain is Cytoplasmic. A helical transmembrane segment spans residues 27 to 47 (VGHFLNDLCASMWFTYLLLYL). The Lumenal segment spans residues 48–56 (HSVRAYSSR). The helical transmembrane segment at 57–77 (GAGLLLLLGQVADGLCTPLVG) threads the bilayer. At 78 to 97 (YEADRAASCCARYGPRKAWH) the chain is on the cytoplasmic side. A helical transmembrane segment spans residues 98–118 (LVGTVCVLLSFPFIFSPCLGC). The Lumenal segment spans residues 119-124 (GAATPE). Residues 125 to 145 (WAALLYYGPFIVIFQFGWAST) form a helical membrane-spanning segment. Topologically, residues 146–170 (QISHLSLIPELVTNDHEKVELTALR) are cytoplasmic. A helical transmembrane segment spans residues 171–191 (YAFTVVANITVYGAAWLLLHL). The Lumenal segment spans residues 192–218 (QGSSRVEPTQDISISDQLGGQDVPVFR). Residues 219-239 (NLSLLVVGVGAVFSLLFHLGT) traverse the membrane as a helical segment. Topologically, residues 240 to 279 (RERRRPHAEEPGEHTPLLAPATAQPLLLWKHWLREPAFYQ) are cytoplasmic. A Phosphothreonine; by MTOR modification is found at Thr-254. A helical transmembrane segment spans residues 280–302 (VGILYMTTRLIVNLSQTYMAMYL). The Lumenal portion of the chain corresponds to 303-310 (TYSLHLPK). The helical transmembrane segment at 311 to 331 (KFIATIPLVMYLSGFLSSFLM) threads the bilayer. Over 332-347 (KPINKCIGRNMTYFSG) the chain is Cytoplasmic. The next 2 helical transmembrane spans lie at 348–368 (LLVI…GVAV) and 369–389 (YAAA…SLAM). Residues 390-402 (TADLIGPHTNSGA) are Cytoplasmic-facing. Residues 403-423 (FVYGSMSFLDKVANGLAVMAI) form a helical membrane-spanning segment. Topologically, residues 424–446 (QSLHPCPSELCCRACVSFYHWAM) are lumenal. The chain crosses the membrane as a helical span at residues 447–467 (VAVTGGVGVAAALCLCSLLLW). At 468 to 480 (PTRLRRWDRDARP) the chain is on the cytoplasmic side.

It belongs to the major facilitator superfamily. In terms of processing, phosphorylation at Thr-254 by MTOR via mTORC1 pathway promotes cysteine transport in lysosomes, thereby regulating lysosomal cysteine and cystine storage and redox homeostasis. In terms of tissue distribution, widely expressed, with high expression in primary melanocytes.

Its subcellular location is the melanosome membrane. The protein resides in the lysosome membrane. The catalysed reaction is L-cysteine(in) = L-cysteine(out). Its function is as follows. Transporter that mediates the import of cysteine into melanosomes, thereby regulating skin pigmentation. In melanosomes, cysteine import is required both for normal levels of cystine, the oxidized dimer of cysteine, and provide cysteine for the production of the cysteinyldopas used in pheomelanin synthesis, thereby regulating skin pigmentation. Also catalyzes import of cysteine into lysosomes in non-pigmented cells, regulating lysosomal cystine and cysteine storage, which is essnetial for redox homeostasis. In Homo sapiens (Human), this protein is Major facilitator superfamily domain-containing protein 12.